A 387-amino-acid polypeptide reads, in one-letter code: uncharacterized protein (387 aa).

Residues 5 to 25 form a helical membrane-spanning segment; the sequence is FVLFSFPFLLLSSMLIFYQTT.

Belongs to the LicD transferase family.

Its subcellular location is the membrane. This is an uncharacterized protein from Caenorhabditis elegans.